The primary structure comprises 810 residues: Transmembrane channel-like protein 6 (810 aa).

The tract at residues 1-26 (MAQSLALALDVPETTGDEGLEPSPYE) is disordered. At 1 to 205 (MAQSLALALD…GAFSCCSRLR (205 aa)) the chain is on the lumenal side. Acidic residues predominate over residues 15–26 (TGDEGLEPSPYE). T88 bears the Phosphothreonine mark. R93 carries the post-translational modification Omega-N-methylarginine. A glycan (N-linked (GlcNAc...) asparagine) is linked at N102. At T104 the chain carries Phosphothreonine. S136 carries the post-translational modification Phosphoserine. Residues 206–226 (YTCMLALHSLGLALLSGLYAA) form a helical membrane-spanning segment. Over 227–253 (RPWRYALKQIGGQFGSSVLSYFLFLKT) the chain is Cytoplasmic. Residues 254–274 (LLAFNALMLLPLLAFLVGVQA) form a helical membrane-spanning segment. At 275–338 (AFPPDPAGPV…PRLGSLPYNM (64 aa)) the chain is on the lumenal side. N311 carries an N-linked (GlcNAc...) asparagine glycan. The helical transmembrane segment at 339–359 (PLAYLFTMGATFFLTCIILVY) threads the bilayer. The Cytoplasmic segment spans residues 360 to 429 (SMSHSFGESY…PRSVCGQLRQ (70 aa)). The helical transmembrane segment at 430–450 (VVVLGLGWLLCLGSTMGCTVA) threads the bilayer. Over 451 to 468 (VLTFSEVMIQRPASGGQG) the chain is Lumenal. The chain crosses the membrane as a helical span at residues 469-489 (VEALALPLVVSVLNLGASYLF). At 490–504 (RGLATLERHDSPVLE) the chain is on the cytoplasmic side. The helical transmembrane segment at 505–525 (VYMAICRNLILKMAVLGVLCY) threads the bilayer. Topologically, residues 526–552 (HWLGRRVATLQGQCWEDFVGQELYRFM) are lumenal. The helical transmembrane segment at 553 to 573 (VVDFIFMLLDSLFGELVWRLI) threads the bilayer. Residues 574–603 (SEKKLKRGQKPEFDIARNVLDLIYGQTLTW) are Cytoplasmic-facing. A helical transmembrane segment spans residues 604–624 (LGVLFSPLLPAVQILRLLFLF). Residues 625 to 649 (HIKKASLMANCQAPRRPWLASHMST) are Lumenal-facing. A helical transmembrane segment spans residues 650–670 (VFLTLLCFPSFLGAAVFLCYA). The Cytoplasmic portion of the chain corresponds to 671–721 (VWQVRPSSTCGPFRTLNTMYEAGTVWVRRLEHAGSGASWLPWLHHFLVENT). A helical membrane pass occupies residues 722–742 (FFLFLASALLLAVIYFNIQVV). Residues 743–810 (KGQRKVICLL…QKEPCNPRSP (68 aa)) lie on the Lumenal side of the membrane. The disordered stretch occupies residues 775 to 810 (EEEGRSRPGRTQDATEPPAWHEDGGDQKEPCNPRSP). The span at 793-810 (AWHEDGGDQKEPCNPRSP) shows a compositional bias: basic and acidic residues.

This sequence belongs to the TMC family. As to quaternary structure, interacts with TMC8. Interacts and forms a complex with TMC8 and CIB1; the interaction stabilizes each component of the complex. Interacts and forms a complex with TMC8 and SLC30A1/ZNT1; the interaction regulates zinc transport into the ER. In terms of tissue distribution, widely expressed. Highly expressed in thymus, lung and spleen. Expressed in lymphocytes and peripheral lymphocytes. Expressed in small and medium dorsal root ganglion (DRG) neurons.

Its subcellular location is the endoplasmic reticulum membrane. Acts as a regulatory protein involved in the regulation of numerous cellular processes. Together with its homolog TMC8/EVER2, forms a complex with calcium-binding protein CIB1 in lymphocytes and keratynocytes where TMC6 and TMC8 stabilize CIB1 and reciprocally. Together with TMC8, also forms a complex with and activates zinc transporter ZNT1 at the ER membrane of keratynocytes, thereby facilitating zinc uptake into the ER. Down-regulates the activity of transcription factors induced by zinc and cytokines. Also plays a role in thermal sensation by inhibiting the M-channel (KCNQ2-KCNQ3 channel) current in primary sensory neurons. The sequence is that of Transmembrane channel-like protein 6 from Mus musculus (Mouse).